Here is a 330-residue protein sequence, read N- to C-terminus: Probable UDP-3-O-acylglucosamine N-acyltransferase 1, mitochondrial (330 aa).

The N-terminal 52 residues, Met-1 to Ser-52, are a transit peptide targeting the mitochondrion. Phe-160 to Phe-162 contacts UDP-N-acetyl-alpha-D-glucosamine. Hexadecanoate is bound by residues Asp-210 and Gln-214. Residue His-217 is the Proton acceptor of the active site. Asn-218, Ser-236, and His-254 together coordinate UDP-N-acetyl-alpha-D-glucosamine.

It belongs to the transferase hexapeptide repeat family. LpxD subfamily. As to quaternary structure, homotrimer.

The protein resides in the mitochondrion. It carries out the reaction a UDP-3-O-[(3R)-3-hydroxyacyl]-alpha-D-glucosamine + a (3R)-hydroxyacyl-[ACP] = a UDP-2-N,3-O-bis[(3R)-3-hydroxyacyl]-alpha-D-glucosamine + holo-[ACP] + H(+). Its pathway is glycolipid biosynthesis; lipid IV(A) biosynthesis; lipid IV(A) from (3R)-3-hydroxytetradecanoyl-[acyl-carrier-protein] and UDP-N-acetyl-alpha-D-glucosamine: step 3/6. Functionally, involved in the biosynthesis of lipid A, a phosphorylated glycolipid that in bacteria anchors the lipopolysaccharide to the outer membrane of the cell. Lipid A-like molecules in plants may serve as structural components of the outer membranes of mitochondria and/or chloroplasts, or may be involved in signal transduction or plant defense responses. This is Probable UDP-3-O-acylglucosamine N-acyltransferase 1, mitochondrial (LPXD1) from Arabidopsis thaliana (Mouse-ear cress).